We begin with the raw amino-acid sequence, 108 residues long: Biogenesis of lysosome-related organelles complex 1 subunit CNL1 (108 aa).

Belongs to the BLOC1S4 family. As to quaternary structure, component of the biogenesis of lysosome-related organelles complex-1 (BLOC-1).

The protein resides in the cytoplasm. In terms of biological role, component of the biogenesis of lysosome-related organelles complex-1 (BLOC-1), a complex that is involved in endosomal cargo sorting. This chain is Biogenesis of lysosome-related organelles complex 1 subunit CNL1 (CLN1), found in Zygosaccharomyces rouxii (strain ATCC 2623 / CBS 732 / NBRC 1130 / NCYC 568 / NRRL Y-229).